Reading from the N-terminus, the 469-residue chain is Citrate synthase, mitochondrial (469 aa).

The transit peptide at 1 to 30 (MSFLTVSRLAPKLLNSKNATYFLVAARNAS) directs the protein to the mitochondrion. Catalysis depends on residues H304 and H350. R359 serves as a coordination point for oxaloacetate. The active site involves D405. R431 and R451 together coordinate oxaloacetate.

The protein belongs to the citrate synthase family. Homodimer.

Its subcellular location is the mitochondrion matrix. It carries out the reaction oxaloacetate + acetyl-CoA + H2O = citrate + CoA + H(+). It functions in the pathway carbohydrate metabolism; tricarboxylic acid cycle; isocitrate from oxaloacetate: step 1/2. Key enzyme of the Krebs tricarboxylic acid cycle which catalyzes the synthesis of citrate from acetyl coenzyme A and oxaloacetate. The chain is Citrate synthase, mitochondrial (cs) from Xiphias gladius (Swordfish).